The following is a 237-amino-acid chain: Small ribosomal subunit protein uS3 (237 aa).

One can recognise a KH type-2 domain in the interval 17–86; it reads VERHLGHELK…SPQIEVQQVD (70 aa).

The protein belongs to the universal ribosomal protein uS3 family. Part of the 30S ribosomal subunit.

Functionally, binds the lower part of the 30S subunit head. The polypeptide is Small ribosomal subunit protein uS3 (Methanospirillum hungatei JF-1 (strain ATCC 27890 / DSM 864 / NBRC 100397 / JF-1)).